Consider the following 36-residue polypeptide: Photosystem I reaction center subunit VIII (36 aa).

Residues Pro7–Tyr29 form a helical membrane-spanning segment.

It belongs to the PsaI family.

The protein localises to the plastid. Its subcellular location is the chloroplast thylakoid membrane. May help in the organization of the PsaL subunit. This chain is Photosystem I reaction center subunit VIII, found in Psilotum nudum (Whisk fern).